A 602-amino-acid chain; its full sequence is Aspartate--tRNA(Asp/Asn) ligase (602 aa).

Position 175 (Glu175) interacts with L-aspartate. Residues 199–202 (QIFK) form an aspartate region. Position 221 (Arg221) interacts with L-aspartate. Residues 221-223 (RDE) and Gln230 each bind ATP. L-aspartate is bound at residue His458. An ATP-binding site is contributed by Glu492. Arg499 contributes to the L-aspartate binding site. Residue 544–547 (GLDR) coordinates ATP.

The protein belongs to the class-II aminoacyl-tRNA synthetase family. Type 1 subfamily. As to quaternary structure, homodimer.

It is found in the cytoplasm. It carries out the reaction tRNA(Asx) + L-aspartate + ATP = L-aspartyl-tRNA(Asx) + AMP + diphosphate. Its function is as follows. Aspartyl-tRNA synthetase with relaxed tRNA specificity since it is able to aspartylate not only its cognate tRNA(Asp) but also tRNA(Asn). Reaction proceeds in two steps: L-aspartate is first activated by ATP to form Asp-AMP and then transferred to the acceptor end of tRNA(Asp/Asn). This chain is Aspartate--tRNA(Asp/Asn) ligase, found in Cupriavidus taiwanensis (strain DSM 17343 / BCRC 17206 / CCUG 44338 / CIP 107171 / LMG 19424 / R1) (Ralstonia taiwanensis (strain LMG 19424)).